Here is a 426-residue protein sequence, read N- to C-terminus: Histidine--tRNA ligase (426 aa).

This sequence belongs to the class-II aminoacyl-tRNA synthetase family. As to quaternary structure, homodimer.

It localises to the cytoplasm. The catalysed reaction is tRNA(His) + L-histidine + ATP = L-histidyl-tRNA(His) + AMP + diphosphate + H(+). The chain is Histidine--tRNA ligase from Streptococcus equi subsp. zooepidemicus (strain H70).